We begin with the raw amino-acid sequence, 602 residues long: Elongation factor 4 (602 aa).

Positions 7-188 (ENIRNFSIIA…AIVELIPPPK (182 aa)) constitute a tr-type G domain. GTP contacts are provided by residues 19-24 (DHGKST) and 135-138 (NKID).

It belongs to the TRAFAC class translation factor GTPase superfamily. Classic translation factor GTPase family. LepA subfamily.

It localises to the cell inner membrane. It catalyses the reaction GTP + H2O = GDP + phosphate + H(+). In terms of biological role, required for accurate and efficient protein synthesis under certain stress conditions. May act as a fidelity factor of the translation reaction, by catalyzing a one-codon backward translocation of tRNAs on improperly translocated ribosomes. Back-translocation proceeds from a post-translocation (POST) complex to a pre-translocation (PRE) complex, thus giving elongation factor G a second chance to translocate the tRNAs correctly. Binds to ribosomes in a GTP-dependent manner. The sequence is that of Elongation factor 4 from Chlamydia abortus (strain DSM 27085 / S26/3) (Chlamydophila abortus).